A 1167-amino-acid chain; its full sequence is ATP-dependent helicase/deoxyribonuclease subunit B (1167 aa).

Residues 1–359 (MSLRFLLGRS…IRQTEAYRDL (359 aa)) form the UvrD-like helicase ATP-binding domain. 8-15 (GRSGSGKT) contributes to the ATP binding site. The UvrD-like helicase C-terminal domain occupies 282-588 (VNRRHQDKAL…EFALVPPAID (307 aa)). Residues Cys803, Cys1125, Cys1128, and Cys1134 each coordinate [4Fe-4S] cluster.

This sequence belongs to the helicase family. AddB/RexB type 1 subfamily. As to quaternary structure, heterodimer of AddA and AddB. The cofactor is Mg(2+). [4Fe-4S] cluster is required as a cofactor.

In terms of biological role, the heterodimer acts as both an ATP-dependent DNA helicase and an ATP-dependent, dual-direction single-stranded exonuclease. Recognizes the chi site generating a DNA molecule suitable for the initiation of homologous recombination. The AddB subunit has 5' -&gt; 3' nuclease activity but not helicase activity. The protein is ATP-dependent helicase/deoxyribonuclease subunit B of Geobacillus thermodenitrificans (strain NG80-2).